Consider the following 2670-residue polypeptide: Inositol 1,4,5-trisphosphate-gated calcium channel ITPR3 (2670 aa).

Over 1 to 2201 (MNEMSSFLHI…LIYWFSRRMT (2201 aa)) the chain is Cytoplasmic. 5 consecutive MIR domains span residues 113–173 (GDVV…LRSN), 174–224 (GDNV…INLF), 232–288 (EEVL…VEVV), 295–372 (GGAG…LDPT), and 378–434 (DSFV…IVSV). Arginine 266, threonine 268, leucine 269, and arginine 270 together coordinate 1D-myo-inositol 1,4,5-trisphosphate. Residues 321 to 344 (PSYKGDVSDPKAAGPGAQSRTGRR) form a disordered region. 1D-myo-inositol 1,4,5-trisphosphate-binding residues include arginine 503, lysine 507, arginine 510, tyrosine 567, arginine 568, and lysine 569. Arginine 743 contacts Ca(2+). Phosphoserine occurs at positions 916 and 934. Positions 1122 and 1125 each coordinate Ca(2+). The span at 1134–1153 (VKGEEGEAGASKDKKERPSD) shows a compositional bias: basic and acidic residues. Disordered stretches follow at residues 1134–1164 (VKGE…HGEK) and 1807–1849 (NMSD…GLHR). Phosphoserine occurs at positions 1813, 1832, and 1834. Over residues 1831-1842 (SSFSMPSSSRYS) the composition is skewed to low complexity. Ca(2+)-binding residues include glutamate 1881 and glutamate 1945. ATP contacts are provided by alanine 1995, glutamate 2148, and lysine 2151. The helical transmembrane segment at 2202-2222 (LWGSISFNLAVFINIIIAFFY) threads the bilayer. At 2223–2233 (PYVEGASTGVL) the chain is on the extracellular side. The helical transmembrane segment at 2234-2254 (GSPLISLLFWILICFSIAALF) threads the bilayer. Topologically, residues 2255-2263 (TKHYSVRPL) are cytoplasmic. A helical transmembrane segment spans residues 2264-2284 (IVALVLRSIYYLGIGPTLNIL). The Extracellular portion of the chain corresponds to 2285–2324 (GALNLTNKIVFVVSFVGNRGTFIRGYKAMVMDMEFLYHVG). Residues 2325–2345 (YILTSVLGLFAHELFYSILLF) traverse the membrane as a helical segment. Residues 2346 to 2367 (DLIYREETLFNVIKSVTRNGRS) lie on the Cytoplasmic side of the membrane. Residues 2368-2388 (ILLTALLALILVYLFSIVGFL) traverse the membrane as a helical segment. Over 2389-2495 (FLKDDFILEV…ESLFPARVVY (107 aa)) the chain is Extracellular. Cysteine 2454 and cysteine 2460 are oxidised to a cystine. Residues 2496–2516 (DLLFFFIVIIIVLNLIFGVII) traverse the membrane as a helical segment. At 2517-2670 (DTFADLRSEK…FVDVQNCMSR (154 aa)) the chain is on the cytoplasmic side. ATP contacts are provided by cysteine 2537 and phenylalanine 2538. Cysteine 2537 is a Zn(2+) binding site. Zn(2+) contacts are provided by cysteine 2540 and histidine 2557. ATP is bound by residues lysine 2559, histidine 2562, asparagine 2563, and methionine 2564. Histidine 2562 lines the Zn(2+) pocket. Threonine 2580 serves as a coordination point for Ca(2+). Phosphoserine is present on residues serine 2608 and serine 2669.

It belongs to the InsP3 receptor family. Homotetramer. Homodimer. Interacts with TRPC1 and TRPC3. Interacts with TRPC4. Interacts with TRPV4. Interacts with SIGMAR1. Interacts with AKT1 and PML. Interacts with IRAG2 (via coiled-coil domain). Interacts with CABP1. Interacts with TMBIM4/LFG4. Interacts with CEMIP. Interacts with TESPA1. Interacts with TMEM203. Interacts with BOK; regulates ITPR3 expression. Interacts with BCL2L10. Interacts with CHGA and CHGB. Post-translationally, phosphorylated by AKT1 on serine and/or threonine residues.

The protein localises to the endoplasmic reticulum membrane. The protein resides in the cytoplasmic vesicle. Its subcellular location is the secretory vesicle membrane. It carries out the reaction Ca(2+)(in) = Ca(2+)(out). Inositol 1,4,5-trisphosphate-gated calcium channel is regulated by cytosolic calcium in a biphasic manner. At low concentrations, cytosolic calcium binds at a high-affinity juxtamembrane domain (JD) calcium binding site, allowing ITPR3 to activate by escaping a low-energy resting state through an ensemble of preactivated states. At high cytosolic calcium concentrations, ITPR3 preferentially enters an inhibited state stabilized by calcium binding at a second, low-affinity cytoplasmic domain (CD) calcium binding site. Inositol 1,4,5-trisphosphate-gated calcium channel that, upon 1D-myo-inositol 1,4,5-trisphosphate binding, transports calcium from the endoplasmic reticulum lumen to cytoplasm, thus releasing the intracellular calcium and therefore participates in cellular calcium ion homeostasis. 11D-myo-inositol 1,4,5-trisphosphate binds to the ligand-free channel without altering its global conformation, yielding the low-energy resting state, then progresses through resting-to preactivated transitions to the higher energy preactivated state, which increases affinity for calcium, promoting binding of the low basal cytosolic calcium at the juxtamembrane domain (JD) site, favoring the transition through the ensemble of high-energy intermediate states along the trajectory to the fully-open activated state. Upon opening, releases calcium in the cytosol where it can bind to the low-affinity cytoplasmic domain (CD) site and stabilizes the inhibited state to terminate calcium release. The chain is Inositol 1,4,5-trisphosphate-gated calcium channel ITPR3 from Rattus norvegicus (Rat).